Consider the following 192-residue polypeptide: UPF0312 protein Pput_4854 (192 aa).

An N-terminal signal peptide occupies residues 1–23 (MLKKTFAALALGTALLSAGQAMA).

It belongs to the UPF0312 family. Type 1 subfamily.

It localises to the periplasm. The protein is UPF0312 protein Pput_4854 of Pseudomonas putida (strain ATCC 700007 / DSM 6899 / JCM 31910 / BCRC 17059 / LMG 24140 / F1).